Reading from the N-terminus, the 120-residue chain is Seripauperin-24 (120 aa).

The first 20 residues, 1–20, serve as a signal peptide directing secretion; sequence MVKLTSIAAGVAAIAATASA.

This sequence belongs to the SRP1/TIP1 family. Seripauperin subfamily. Post-translationally, O-glycosylated.

Its subcellular location is the secreted. It is found in the cell wall. In terms of biological role, component of the cell wall. This is Seripauperin-24 (PAU24) from Saccharomyces cerevisiae (strain ATCC 204508 / S288c) (Baker's yeast).